A 256-amino-acid chain; its full sequence is Phosphomannomutase (256 aa).

Asp-12 serves as the catalytic Nucleophile. Mg(2+) is bound by residues Asp-12 and Asp-14. Asp-14 functions as the Proton donor/acceptor in the catalytic mechanism. Alpha-D-mannose 1-phosphate-binding residues include Arg-21, Arg-123, Arg-134, Arg-141, Ser-179, and Asp-181. Mg(2+) is bound at residue Asp-209.

The protein belongs to the eukaryotic PMM family. In terms of assembly, homodimer.

It localises to the cytoplasm. It catalyses the reaction alpha-D-mannose 1-phosphate = D-mannose 6-phosphate. It participates in nucleotide-sugar biosynthesis; GDP-alpha-D-mannose biosynthesis; alpha-D-mannose 1-phosphate from D-fructose 6-phosphate: step 2/2. Functionally, involved in the synthesis of the GDP-mannose and dolichol-phosphate-mannose required for a number of critical mannosyl transfer reactions. The sequence is that of Phosphomannomutase (SEC53) from Encephalitozoon cuniculi (strain GB-M1) (Microsporidian parasite).